The sequence spans 93 residues: Small ribosomal subunit protein uS15 (93 aa).

Belongs to the universal ribosomal protein uS15 family. In terms of assembly, part of the 30S ribosomal subunit. Forms a bridge to the 50S subunit in the 70S ribosome, contacting the 23S rRNA.

Its function is as follows. One of the primary rRNA binding proteins, it binds directly to 16S rRNA where it helps nucleate assembly of the platform of the 30S subunit by binding and bridging several RNA helices of the 16S rRNA. Forms an intersubunit bridge (bridge B4) with the 23S rRNA of the 50S subunit in the ribosome. In Anaplasma marginale (strain Florida), this protein is Small ribosomal subunit protein uS15.